Consider the following 132-residue polypeptide: Small ribosomal subunit protein uS8c (132 aa).

This sequence belongs to the universal ribosomal protein uS8 family. In terms of assembly, part of the 30S ribosomal subunit.

The protein localises to the plastid. Its subcellular location is the chloroplast. Its function is as follows. One of the primary rRNA binding proteins, it binds directly to 16S rRNA central domain where it helps coordinate assembly of the platform of the 30S subunit. The polypeptide is Small ribosomal subunit protein uS8c (rps8) (Huperzia lucidula (Shining clubmoss)).